Consider the following 401-residue polypeptide: 1-deoxy-D-xylulose 5-phosphate reductoisomerase (401 aa).

6 residues coordinate NADPH: threonine 10, glycine 11, serine 12, isoleucine 13, asparagine 38, and asparagine 124. Lysine 125 contacts 1-deoxy-D-xylulose 5-phosphate. NADPH is bound at residue glutamate 126. Aspartate 150 provides a ligand contact to Mn(2+). 1-deoxy-D-xylulose 5-phosphate contacts are provided by serine 151, glutamate 152, serine 186, and histidine 209. Glutamate 152 contacts Mn(2+). Glycine 215 provides a ligand contact to NADPH. 4 residues coordinate 1-deoxy-D-xylulose 5-phosphate: serine 222, asparagine 227, lysine 228, and glutamate 231. Glutamate 231 serves as a coordination point for Mn(2+).

Belongs to the DXR family. Mg(2+) serves as cofactor. Mn(2+) is required as a cofactor.

It catalyses the reaction 2-C-methyl-D-erythritol 4-phosphate + NADP(+) = 1-deoxy-D-xylulose 5-phosphate + NADPH + H(+). The protein operates within isoprenoid biosynthesis; isopentenyl diphosphate biosynthesis via DXP pathway; isopentenyl diphosphate from 1-deoxy-D-xylulose 5-phosphate: step 1/6. In terms of biological role, catalyzes the NADPH-dependent rearrangement and reduction of 1-deoxy-D-xylulose-5-phosphate (DXP) to 2-C-methyl-D-erythritol 4-phosphate (MEP). This is 1-deoxy-D-xylulose 5-phosphate reductoisomerase from Vibrio campbellii (strain ATCC BAA-1116).